Consider the following 269-residue polypeptide: Formamidopyrimidine-DNA glycosylase (269 aa).

P2 acts as the Schiff-base intermediate with DNA in catalysis. The Proton donor role is filled by E3. K57 acts as the Proton donor; for beta-elimination activity in catalysis. Residues H90, R109, and K150 each contribute to the DNA site. The segment at 235–269 (QVYGRKGEPCRICGMPVVGTKHAQRATFYCRQCQK) adopts an FPG-type zinc-finger fold. R259 (proton donor; for delta-elimination activity) is an active-site residue.

It belongs to the FPG family. Monomer. Zn(2+) serves as cofactor.

The catalysed reaction is Hydrolysis of DNA containing ring-opened 7-methylguanine residues, releasing 2,6-diamino-4-hydroxy-5-(N-methyl)formamidopyrimidine.. The enzyme catalyses 2'-deoxyribonucleotide-(2'-deoxyribose 5'-phosphate)-2'-deoxyribonucleotide-DNA = a 3'-end 2'-deoxyribonucleotide-(2,3-dehydro-2,3-deoxyribose 5'-phosphate)-DNA + a 5'-end 5'-phospho-2'-deoxyribonucleoside-DNA + H(+). Functionally, involved in base excision repair of DNA damaged by oxidation or by mutagenic agents. Acts as a DNA glycosylase that recognizes and removes damaged bases. Has a preference for oxidized purines, such as 7,8-dihydro-8-oxoguanine (8-oxoG). Has AP (apurinic/apyrimidinic) lyase activity and introduces nicks in the DNA strand. Cleaves the DNA backbone by beta-delta elimination to generate a single-strand break at the site of the removed base with both 3'- and 5'-phosphates. The polypeptide is Formamidopyrimidine-DNA glycosylase (Klebsiella pneumoniae subsp. pneumoniae (strain ATCC 700721 / MGH 78578)).